A 141-amino-acid polypeptide reads, in one-letter code: MEWLSGFLDQIIAFFQWIWDFFAQGIYDFVRDGLVVATKASMYAALQTLILLIDVSYTAARELIDSLGVPQMIRSMYAALPGPIAAGLAFFGVPQALNIIMGRGGDALLHALRAVHWEVIRVDQDPSRPQWLLQNLRRDPG.

Transmembrane regions (helical) follow at residues 3-23 (WLSGFLDQIIAFFQWIWDFFA), 33-53 (GLVVATKASMYAALQTLILLI), and 80-100 (LPGPIAAGLAFFGVPQALNII).

Belongs to the inovirus G6P protein family. As to quaternary structure, interacts with G3P; this interaction is required for proper integration of G3P and G6P into the virion.

The protein resides in the virion. The protein localises to the host membrane. Its function is as follows. Plays essential roles both in the entry of the viral genome into the bacterial host and in budding process. The formation of the G3P-G6P complex termed adsorption complex is essential for correct termination of filamentous phage assembly. The sequence is that of Head virion protein G6P (VI) from Pseudomonas phage Pf1 (Bacteriophage Pf1).